The chain runs to 330 residues: Phosphate acyltransferase (330 aa).

It belongs to the PlsX family. As to quaternary structure, homodimer. Probably interacts with PlsY.

The protein resides in the cytoplasm. The catalysed reaction is a fatty acyl-[ACP] + phosphate = an acyl phosphate + holo-[ACP]. The protein operates within lipid metabolism; phospholipid metabolism. Functionally, catalyzes the reversible formation of acyl-phosphate (acyl-PO(4)) from acyl-[acyl-carrier-protein] (acyl-ACP). This enzyme utilizes acyl-ACP as fatty acyl donor, but not acyl-CoA. The protein is Phosphate acyltransferase of Teredinibacter turnerae (strain ATCC 39867 / T7901).